We begin with the raw amino-acid sequence, 363 residues long: 3-isopropylmalate dehydrogenase (363 aa).

79–92 (GPKWEHLPPNDQPE) is an NAD(+) binding site. 4 residues coordinate substrate: arginine 100, arginine 110, arginine 139, and aspartate 228. Mg(2+) is bound by residues aspartate 228, aspartate 252, and aspartate 256. 286-298 (GSAPDIAGKNIAN) is a binding site for NAD(+).

It belongs to the isocitrate and isopropylmalate dehydrogenases family. LeuB type 1 subfamily. Homodimer. It depends on Mg(2+) as a cofactor. Requires Mn(2+) as cofactor.

It is found in the cytoplasm. The catalysed reaction is (2R,3S)-3-isopropylmalate + NAD(+) = 4-methyl-2-oxopentanoate + CO2 + NADH. It functions in the pathway amino-acid biosynthesis; L-leucine biosynthesis; L-leucine from 3-methyl-2-oxobutanoate: step 3/4. Its function is as follows. Catalyzes the oxidation of 3-carboxy-2-hydroxy-4-methylpentanoate (3-isopropylmalate) to 3-carboxy-4-methyl-2-oxopentanoate. The product decarboxylates to 4-methyl-2 oxopentanoate. This chain is 3-isopropylmalate dehydrogenase, found in Aliivibrio fischeri (strain ATCC 700601 / ES114) (Vibrio fischeri).